The chain runs to 210 residues: 3-hexulose-6-phosphate synthase (210 aa).

The protein belongs to the HPS/KGPDC family. HPS subfamily.

It catalyses the reaction D-ribulose 5-phosphate + formaldehyde = D-arabino-hex-3-ulose 6-phosphate. Its pathway is one-carbon metabolism; formaldehyde assimilation via RuMP pathway; D-fructose 6-phosphate from D-ribulose 5-phosphate and formaldehyde: step 1/2. Catalyzes the condensation of ribulose 5-phosphate with formaldehyde to form 3-hexulose 6-phosphate. The polypeptide is 3-hexulose-6-phosphate synthase (Staphylococcus aureus (strain NCTC 8325 / PS 47)).